We begin with the raw amino-acid sequence, 160 residues long: Cytochrome b6-f complex subunit 4 (160 aa).

3 consecutive transmembrane segments (helical) span residues leucine 36–valine 56, leucine 95–glutamate 115, and threonine 131–isoleucine 151.

It belongs to the cytochrome b family. PetD subfamily. The 4 large subunits of the cytochrome b6-f complex are cytochrome b6, subunit IV (17 kDa polypeptide, petD), cytochrome f and the Rieske protein, while the 4 small subunits are petG, petL, petM and petN. The complex functions as a dimer.

The protein resides in the plastid. The protein localises to the chloroplast thylakoid membrane. Its function is as follows. Component of the cytochrome b6-f complex, which mediates electron transfer between photosystem II (PSII) and photosystem I (PSI), cyclic electron flow around PSI, and state transitions. This is Cytochrome b6-f complex subunit 4 from Spinacia oleracea (Spinach).